A 42-amino-acid polypeptide reads, in one-letter code: DRDSCVDKSRCAKYGHYQECTDCCKKYGHNGGTCMFFKCKCA.

Cystine bridges form between Cys5–Cys23, Cys11–Cys34, Cys20–Cys39, and Cys24–Cys41.

It belongs to the ergtoxin family. Gamma-KTx 1 subfamily. As to expression, expressed by the venom gland.

The protein resides in the secreted. Its function is as follows. Blocks Kv11/ERG potassium channels. The protein is Potassium channel toxin gamma-KTx 1.3 of Centruroides gracilis (Slenderbrown scorpion).